The primary structure comprises 174 residues: Gamma-crystallin A (174 aa).

2 Beta/gamma crystallin 'Greek key' domains span residues 2–40 (GKITFYEDRGFQGRCYECSSDCPNLQTYFSRCNSIRVDS) and 41–83 (GCWM…RSIP). The interval 84–87 (YTSS) is connecting peptide. 2 Beta/gamma crystallin 'Greek key' domains span residues 88–128 (HRIR…HVLE) and 129–171 (GSWV…RRVM).

Belongs to the beta/gamma-crystallin family.

Its function is as follows. Crystallins are the dominant structural components of the vertebrate eye lens. This is Gamma-crystallin A (Cryga) from Rattus norvegicus (Rat).